The chain runs to 329 residues: N-acetyl-gamma-glutamyl-phosphate reductase (329 aa).

Residue Cys155 is part of the active site.

This sequence belongs to the NAGSA dehydrogenase family. Type 1 subfamily.

The protein resides in the cytoplasm. It catalyses the reaction N-acetyl-L-glutamate 5-semialdehyde + phosphate + NADP(+) = N-acetyl-L-glutamyl 5-phosphate + NADPH + H(+). The protein operates within amino-acid biosynthesis; L-arginine biosynthesis; N(2)-acetyl-L-ornithine from L-glutamate: step 3/4. Catalyzes the NADPH-dependent reduction of N-acetyl-5-glutamyl phosphate to yield N-acetyl-L-glutamate 5-semialdehyde. This chain is N-acetyl-gamma-glutamyl-phosphate reductase, found in Shewanella pealeana (strain ATCC 700345 / ANG-SQ1).